The chain runs to 378 residues: Spermidine/putrescine import ATP-binding protein PotA (378 aa).

In terms of domain architecture, ABC transporter spans valine 18–isoleucine 248. An ATP-binding site is contributed by glycine 50–threonine 57.

It belongs to the ABC transporter superfamily. Spermidine/putrescine importer (TC 3.A.1.11.1) family. In terms of assembly, the complex is composed of two ATP-binding proteins (PotA), two transmembrane proteins (PotB and PotC) and a solute-binding protein (PotD).

The protein localises to the cell inner membrane. It catalyses the reaction ATP + H2O + polyamine-[polyamine-binding protein]Side 1 = ADP + phosphate + polyamineSide 2 + [polyamine-binding protein]Side 1.. Its function is as follows. Part of the ABC transporter complex PotABCD involved in spermidine/putrescine import. Responsible for energy coupling to the transport system. The protein is Spermidine/putrescine import ATP-binding protein PotA of Shigella dysenteriae serotype 1 (strain Sd197).